The chain runs to 531 residues: Peptide chain release factor 3 (531 aa).

Residues 10 to 278 enclose the tr-type G domain; it reads RRRRTFAIIS…SLIDWAPAPK (269 aa). GTP-binding positions include 19–26, 87–91, and 141–144; these read SHPDAGKT, DTPGH, and NKYD.

Belongs to the TRAFAC class translation factor GTPase superfamily. Classic translation factor GTPase family. PrfC subfamily.

It is found in the cytoplasm. Functionally, increases the formation of ribosomal termination complexes and stimulates activities of RF-1 and RF-2. It binds guanine nucleotides and has strong preference for UGA stop codons. It may interact directly with the ribosome. The stimulation of RF-1 and RF-2 is significantly reduced by GTP and GDP, but not by GMP. The chain is Peptide chain release factor 3 from Neisseria gonorrhoeae (strain NCCP11945).